Consider the following 279-residue polypeptide: MCEYSKALHILLKSPVTDDIIKFLTDTTLRVVPSSNYPTPPGSPGEKHLTRLPSLMTFITRLVRYTNVYTPTLLTAACYLNKLKRILPRDATGLPSTIHRIFLACLILSAKFHNDSSPLNKHWARYTDGLFTLEDINLMERQLLQLLNWDLRVNTEDLILDLQPLLEPIKQDLARSSDQRKRINMMMSMNRRTCAGTSPIRSNNRFKLYEKQRNVSIASDLSSATLVDSCNDLRRLKDVTNIANNTVANTNYVRTVEKWNDNVNRQSWDLEQIMSQHGF.

A Cyclin N-terminal domain is found at 19–152 (DIIKFLTDTT…LLQLLNWDLR (134 aa)). The interval 29 to 36 (LRVVPSSN) is required for degradation by DMA1. Thr39 carries the phosphothreonine; by PHO85 modification. Phosphoserine; by PHO85 is present on Ser43. Residues Lys82 and Lys121 each participate in a glycyl lysine isopeptide (Lys-Gly) (interchain with G-Cter in ubiquitin) cross-link.

It belongs to the cyclin family. PCL1,2 subfamily. Forms a cyclin-CDK complex with PHO85. Interacts with HMS1, NCP1 and NPA3. Interacts with DMA1. Post-translationally, phosphorylated by PHO85; necessary for interaction with DMA1 and subsequent degradation. Ubiquitinated by E3 ubiquitin ligase DMA1 in response to nutrient condition; this targets PCL1 for destruction.

The protein localises to the cytoplasm. The protein resides in the nucleus. Its function is as follows. G1/S-specific cyclin partner of the cyclin-dependent kinase (CDK) PHO85. Essential for the control of the cell cycle at the G1/S (start) transition. The PCL1-PHO85 cyclin-CDK holoenzyme is involved in phosphorylation of the CDK inhibitor (CKI) SIC1, which is required for its ubiquitination and degradation, releasing repression of b-type cyclins and promoting exit from mitosis. Together with cyclin PCL2, positively controls degradation of sphingoid long chain base kinase LCB4. PCL1-PHO85 phosphorylates LCB4, which is required for its ubiquitination and degradation. PCL1-PHO85 also phosphorylates HMS1, NCP1 and NPA3, which may all have a role in mitotic exit. In Saccharomyces cerevisiae (strain ATCC 204508 / S288c) (Baker's yeast), this protein is PHO85 cyclin-1.